A 98-amino-acid polypeptide reads, in one-letter code: NADH-ubiquinone oxidoreductase chain 4L (98 aa).

Helical transmembrane passes span 1 to 21 (MTPT…GLTF), 26 to 46 (LLSA…SMAL), and 59 to 79 (APML…ALLV).

It belongs to the complex I subunit 4L family. In terms of assembly, core subunit of respiratory chain NADH dehydrogenase (Complex I) which is composed of 45 different subunits.

It localises to the mitochondrion inner membrane. It carries out the reaction a ubiquinone + NADH + 5 H(+)(in) = a ubiquinol + NAD(+) + 4 H(+)(out). Functionally, core subunit of the mitochondrial membrane respiratory chain NADH dehydrogenase (Complex I) which catalyzes electron transfer from NADH through the respiratory chain, using ubiquinone as an electron acceptor. Part of the enzyme membrane arm which is embedded in the lipid bilayer and involved in proton translocation. The sequence is that of NADH-ubiquinone oxidoreductase chain 4L (mt-nd4l) from Danio rerio (Zebrafish).